The sequence spans 398 residues: MLNNKRLFTSESVTEGHPDKIADQVSDAILDAILKDDPNARVACETTVTTGMALIAGEISTTTYVDIPKVVRETIKEIGYTRAKYGYDYETMAILTAIDEQSPDIAQGVDKALEYRDKDSEEEIEATGAGDQGLMFGYATNETETYMPLAIYLSHQLAKRLSDVRKDGTLNYLRPDGKVQVTVEYDENDNPVRIDTIVVSTQHADDVTLEQIQEDIKAHVIYPTVPENLINEQTKFYINPTGRFVIGGPQGDAGLTGRKIIVDTYGGYARHGGGCFSGKDPTKVDRSAAYAARYVAKNIVAAGLADQCEVQLAYAIGVAEPVSIAIDTFGTGKVSEGQLVEAVRKHFDLRPAGIIKMLDLKQPIYKQTAAYGHFGRTDVLFPWEKLDKVEELKDAVKY.

H17 serves as a coordination point for ATP. D19 serves as a coordination point for Mg(2+). E45 provides a ligand contact to K(+). L-methionine-binding residues include E58 and Q101. Residues 101-111 (QSPDIAQGVDK) form a flexible loop region. Residues 176 to 178 (DGK), 243 to 244 (RF), D252, 258 to 259 (RK), and K279 each bind ATP. D252 serves as a coordination point for L-methionine. Residue K283 coordinates L-methionine.

This sequence belongs to the AdoMet synthase family. In terms of assembly, homotetramer; dimer of dimers. Mg(2+) serves as cofactor. The cofactor is K(+).

The protein resides in the cytoplasm. The enzyme catalyses L-methionine + ATP + H2O = S-adenosyl-L-methionine + phosphate + diphosphate. It participates in amino-acid biosynthesis; S-adenosyl-L-methionine biosynthesis; S-adenosyl-L-methionine from L-methionine: step 1/1. In terms of biological role, catalyzes the formation of S-adenosylmethionine (AdoMet) from methionine and ATP. The overall synthetic reaction is composed of two sequential steps, AdoMet formation and the subsequent tripolyphosphate hydrolysis which occurs prior to release of AdoMet from the enzyme. In Staphylococcus aureus (strain Mu3 / ATCC 700698), this protein is S-adenosylmethionine synthase.